The primary structure comprises 353 residues: Melanin-concentrating hormone receptor 1 (353 aa).

The Extracellular segment spans residues 1–45; that stretch reads MDLQASLLSTGPNASNISDGQDNFTLAGPPPRTRSVSYINIIMPS. Residues Asn13, Asn16, and Asn23 are each glycosylated (N-linked (GlcNAc...) asparagine). The helical transmembrane segment at 46 to 66 threads the bilayer; sequence VFGTICLLGIVGNSTVIFAVV. Over 67–79 the chain is Cytoplasmic; sequence KKSKLHWCSNVPD. Residues 80–100 form a helical membrane-spanning segment; the sequence is IFIINLSVVDLLFLLGMPFMI. The Extracellular portion of the chain corresponds to 101 to 116; sequence HQLMGNGVWHFGETMC. An intrachain disulfide couples Cys116 to Cys194. Residues 117-139 traverse the membrane as a helical segment; that stretch reads TLITAMDANSQFTSTYILTAMAI. Over 140-161 the chain is Cytoplasmic; the sequence is DRYLATVHPISSTKFRKPSMAT. Residues 162–182 traverse the membrane as a helical segment; that stretch reads LVICLLWALSFISITPVWLYA. The Extracellular segment spans residues 183–204; it reads RLIPFPGGAVGCGIRLPNPDTD. A helical membrane pass occupies residues 205-225; it reads LYWFTLYQFFLAFALPFVVIT. Topologically, residues 226-256 are cytoplasmic; sequence AAYVKILQRMTSSVAPASQRSIRLRTKRVTR. Residues 257–277 traverse the membrane as a helical segment; it reads TAIAICLVFFVCWAPYYVLQL. Residues 278-294 are Extracellular-facing; the sequence is TQLSISRPTLTFVYLYN. A helical transmembrane segment spans residues 295 to 315; sequence AAISLGYANSCLNPFVYIVLC. The Cytoplasmic portion of the chain corresponds to 316 to 353; the sequence is ETFRKRLVLSVKPAAQGQLRTVSNAQTADEERTESKGT.

This sequence belongs to the G-protein coupled receptor 1 family. Interacts with NCDN. In terms of tissue distribution, expressed predominantly in the brain. Expression in brain is negatively regulated by leptin. Also found in the epithelium of the tongue and kidney.

It localises to the cell membrane. Its function is as follows. Receptor for melanin-concentrating hormone, coupled to both G proteins that inhibit adenylyl cyclase and G proteins that activate phosphoinositide hydrolysis. The polypeptide is Melanin-concentrating hormone receptor 1 (Mus musculus (Mouse)).